Consider the following 363-residue polypeptide: MDLRQQRKRDHVRLAAAWQERRPPPAAAGPGAGWEDVHLVNHSLPELALAEIDLTTSVAGVRLAQPVVINAMTGGADDVTAINRDLAAVAADLGLAMAVGSQTAGLRDPAVADSYRVVRRVNPKGIVLANVGSDATPEQARAAVEMVEADLLQIHLNAPQELRMPEGDRDFRGRLEAIARMVEEAPVPVVVKECGFGVSRDVAVLLHQAGVRAVDVSGRGGTNFAWIEDRRAGLSDPDPGLQNWGIPTACALAEVAALGLPELDLIASGGIRHGSDAAKALALGARAAAVAGPVLLRQQREGARGVMAYLQQFLTDLRAAMLLAGAGSVAAMGQVPVVVTGFTGEWCRLRGVDLMALANRSER.

7-8 is a binding site for substrate; the sequence is RK. FMN contacts are provided by residues 71-73, S101, and N130; that span reads AMT. Q160 contacts substrate. E161 lines the Mg(2+) pocket. Residues K192, S217, T222, 270 to 272, and 291 to 292 contribute to the FMN site; these read GIR and AG.

This sequence belongs to the IPP isomerase type 2 family. In terms of assembly, homooctamer. Dimer of tetramers. Requires FMN as cofactor. NADPH is required as a cofactor. The cofactor is Mg(2+).

The protein localises to the cytoplasm. The enzyme catalyses isopentenyl diphosphate = dimethylallyl diphosphate. Functionally, involved in the biosynthesis of isoprenoids. Catalyzes the 1,3-allylic rearrangement of the homoallylic substrate isopentenyl (IPP) to its allylic isomer, dimethylallyl diphosphate (DMAPP). The polypeptide is Isopentenyl-diphosphate delta-isomerase (Symbiobacterium thermophilum (strain DSM 24528 / JCM 14929 / IAM 14863 / T)).